We begin with the raw amino-acid sequence, 263 residues long: Translation initiation factor 2 subunit alpha (263 aa).

One can recognise an S1 motif domain in the interval 12–83 (GEILIATVKQ…RKGTIDVSLK (72 aa)).

The protein belongs to the eIF-2-alpha family. In terms of assembly, heterotrimer composed of an alpha, a beta and a gamma chain.

In terms of biological role, eIF-2 functions in the early steps of protein synthesis by forming a ternary complex with GTP and initiator tRNA. The sequence is that of Translation initiation factor 2 subunit alpha from Sulfurisphaera tokodaii (strain DSM 16993 / JCM 10545 / NBRC 100140 / 7) (Sulfolobus tokodaii).